The following is a 161-amino-acid chain: Regulator of ribonuclease activity A (161 aa).

Belongs to the RraA family. As to quaternary structure, homotrimer. Binds to both RNA-binding sites in the C-terminal region of Rne and to RhlB.

It is found in the cytoplasm. Functionally, globally modulates RNA abundance by binding to RNase E (Rne) and regulating its endonucleolytic activity. Can modulate Rne action in a substrate-dependent manner by altering the composition of the degradosome. Modulates RNA-binding and helicase activities of the degradosome. The polypeptide is Regulator of ribonuclease activity A (Shigella dysenteriae serotype 1 (strain Sd197)).